A 310-amino-acid chain; its full sequence is Small ribosomal subunit protein uS2 (310 aa).

Disordered stretches follow at residues 213 to 240 (EEQA…GGAA) and 271 to 310 (WDSV…TDWA). Residues 216–227 (AALARQQEEANA) show a composition bias toward low complexity. A compositionally biased stretch (polar residues) spans 297–310 (VTMQEQAKPSTDWA).

It belongs to the universal ribosomal protein uS2 family. Component of the small ribosomal subunit. Mature ribosomes consist of a small (40S) and a large (60S) subunit. The 40S subunit contains about 33 different proteins and 1 molecule of RNA (18S). The 60S subunit contains about 49 different proteins and 3 molecules of RNA (28S, 5.8S and 5S). Interacts with ribosomal protein S21.

The protein resides in the cytoplasm. In terms of biological role, required for the assembly and/or stability of the 40S ribosomal subunit. Required for the processing of the 20S rRNA-precursor to mature 18S rRNA in a late step of the maturation of 40S ribosomal subunits. The sequence is that of Small ribosomal subunit protein uS2 from Nematostella vectensis (Starlet sea anemone).